The chain runs to 761 residues: Dipeptidyl-peptidase 4 (761 aa).

Residues 1–15 form the signal peptide; the sequence is MTLSAWIILVTLAMA. Catalysis depends on charge relay system residues Ser-622, Asp-706, and His-738.

The protein belongs to the peptidase S9C family.

Its subcellular location is the membrane. Functionally, may be involved in metabolism of dipeptides or may affect host defense mechanisms. The chain is Dipeptidyl-peptidase 4 (DPP) from Giardia intestinalis (Giardia lamblia).